Consider the following 97-residue polypeptide: Putative septation protein SpoVG (97 aa).

Belongs to the SpoVG family.

Functionally, could be involved in septation. In Borrelia garinii subsp. bavariensis (strain ATCC BAA-2496 / DSM 23469 / PBi) (Borreliella bavariensis), this protein is Putative septation protein SpoVG.